The primary structure comprises 403 residues: Probable tRNA sulfurtransferase (403 aa).

The 106-residue stretch at Gln-60–Thr-165 folds into the THUMP domain. Residues Met-183–Leu-184, His-208–Phe-209, Arg-265, Gly-287, and Gln-296 contribute to the ATP site.

It belongs to the ThiI family.

It localises to the cytoplasm. It carries out the reaction [ThiI sulfur-carrier protein]-S-sulfanyl-L-cysteine + a uridine in tRNA + 2 reduced [2Fe-2S]-[ferredoxin] + ATP + H(+) = [ThiI sulfur-carrier protein]-L-cysteine + a 4-thiouridine in tRNA + 2 oxidized [2Fe-2S]-[ferredoxin] + AMP + diphosphate. It catalyses the reaction [ThiS sulfur-carrier protein]-C-terminal Gly-Gly-AMP + S-sulfanyl-L-cysteinyl-[cysteine desulfurase] + AH2 = [ThiS sulfur-carrier protein]-C-terminal-Gly-aminoethanethioate + L-cysteinyl-[cysteine desulfurase] + A + AMP + 2 H(+). The protein operates within cofactor biosynthesis; thiamine diphosphate biosynthesis. In terms of biological role, catalyzes the ATP-dependent transfer of a sulfur to tRNA to produce 4-thiouridine in position 8 of tRNAs, which functions as a near-UV photosensor. Also catalyzes the transfer of sulfur to the sulfur carrier protein ThiS, forming ThiS-thiocarboxylate. This is a step in the synthesis of thiazole, in the thiamine biosynthesis pathway. The sulfur is donated as persulfide by IscS. In Listeria innocua serovar 6a (strain ATCC BAA-680 / CLIP 11262), this protein is Probable tRNA sulfurtransferase.